The chain runs to 260 residues: 4-hydroxy-tetrahydrodipicolinate reductase (260 aa).

NAD(+) is bound by residues 12–17, 92–94, and 118–121; these read GFRGKM, GTT, and APNF. His148 serves as the catalytic Proton donor/acceptor. His149 lines the (S)-2,3,4,5-tetrahydrodipicolinate pocket. Residue Lys152 is the Proton donor of the active site. 158–159 is a binding site for (S)-2,3,4,5-tetrahydrodipicolinate; that stretch reads GT.

This sequence belongs to the DapB family.

Its subcellular location is the cytoplasm. The catalysed reaction is (S)-2,3,4,5-tetrahydrodipicolinate + NAD(+) + H2O = (2S,4S)-4-hydroxy-2,3,4,5-tetrahydrodipicolinate + NADH + H(+). The enzyme catalyses (S)-2,3,4,5-tetrahydrodipicolinate + NADP(+) + H2O = (2S,4S)-4-hydroxy-2,3,4,5-tetrahydrodipicolinate + NADPH + H(+). Its pathway is amino-acid biosynthesis; L-lysine biosynthesis via DAP pathway; (S)-tetrahydrodipicolinate from L-aspartate: step 4/4. In terms of biological role, catalyzes the conversion of 4-hydroxy-tetrahydrodipicolinate (HTPA) to tetrahydrodipicolinate. The chain is 4-hydroxy-tetrahydrodipicolinate reductase from Lactococcus lactis subsp. cremoris (strain MG1363).